The primary structure comprises 116 residues: Iron-sulfur cluster insertion protein ErpA (116 aa).

Residues cysteine 44, cysteine 108, and cysteine 110 each coordinate iron-sulfur cluster.

This sequence belongs to the HesB/IscA family. As to quaternary structure, homodimer. Requires iron-sulfur cluster as cofactor.

Functionally, required for insertion of 4Fe-4S clusters for at least IspG. This is Iron-sulfur cluster insertion protein ErpA from Stutzerimonas stutzeri (strain A1501) (Pseudomonas stutzeri).